A 334-amino-acid polypeptide reads, in one-letter code: Beta-hexosaminidase (334 aa).

Substrate-binding positions include Asp-57, Arg-65, Arg-128, and 158 to 159 (KH). The active-site Proton donor/acceptor is His-171. The active-site Nucleophile is Asp-242.

Belongs to the glycosyl hydrolase 3 family. NagZ subfamily.

The protein localises to the cytoplasm. The enzyme catalyses Hydrolysis of terminal non-reducing N-acetyl-D-hexosamine residues in N-acetyl-beta-D-hexosaminides.. It functions in the pathway cell wall biogenesis; peptidoglycan recycling. Functionally, plays a role in peptidoglycan recycling by cleaving the terminal beta-1,4-linked N-acetylglucosamine (GlcNAc) from peptide-linked peptidoglycan fragments, giving rise to free GlcNAc, anhydro-N-acetylmuramic acid and anhydro-N-acetylmuramic acid-linked peptides. This is Beta-hexosaminidase from Methylococcus capsulatus (strain ATCC 33009 / NCIMB 11132 / Bath).